Here is a 255-residue protein sequence, read N- to C-terminus: Taurine import ATP-binding protein TauB (255 aa).

The ABC transporter domain maps to 2-229 (LQISHLYADY…RFVAGESSRS (228 aa)). 34–41 (GPSGCGKT) is an ATP binding site.

This sequence belongs to the ABC transporter superfamily. Taurine importer (TC 3.A.1.17.1) family. In terms of assembly, the complex is composed of two ATP-binding proteins (TauB), two transmembrane proteins (TauC) and a solute-binding protein (TauA).

The protein localises to the cell inner membrane. It carries out the reaction taurine(out) + ATP + H2O = taurine(in) + ADP + phosphate + H(+). Part of the ABC transporter complex TauABC involved in taurine import. Responsible for energy coupling to the transport system. This is Taurine import ATP-binding protein TauB from Escherichia coli (strain K12).